The primary structure comprises 452 residues: Protein mab-21-like 4 (452 aa).

In Mus musculus (Mouse), this protein is Protein mab-21-like 4 (Mab21l4).